The chain runs to 59 residues: MTIAPITGTIKRRVIMDIVLGFSLGGVMASYWWWGFHMDKINKREKFYAELAERKKQEN.

Residues 2-8 (TIAPITG) lie on the Mitochondrial matrix side of the membrane. Residues 9 to 44 (TIKRRVIMDIVLGFSLGGVMASYWWWGFHMDKINKR) traverse the membrane as a helical segment. At 45 to 56 (EKFYAELAERKK) the chain is on the mitochondrial intermembrane side. Residues 57 to 59 (QEN) constitute a propeptide, removed in mature form.

This sequence belongs to the fungal cytochrome c oxidase subunit 7a family. As to quaternary structure, component of the cytochrome c oxidase (complex IV, CIV), a multisubunit enzyme composed of 12 subunits. The complex is composed of a catalytic core of 3 subunits COX1, COX2 and COX3, encoded in the mitochondrial DNA, and 9 supernumerary subunits COX4, COX5A (or COX5B), COX6, COX7, COX8, COX9, COX12, COX13 and COX26, which are encoded in the nuclear genome. The complex exists as a monomer or a dimer and forms supercomplexes (SCs) in the inner mitochondrial membrane with a dimer of ubiquinol-cytochrome c oxidoreductase (cytochrome b-c1 complex, complex III, CIII), resulting in 2 different assemblies (supercomplexes III(2)IV and III(2)IV(2)).

Its subcellular location is the mitochondrion inner membrane. Its pathway is energy metabolism; oxidative phosphorylation. Component of the cytochrome c oxidase, the last enzyme in the mitochondrial electron transport chain which drives oxidative phosphorylation. The respiratory chain contains 3 multisubunit complexes succinate dehydrogenase (complex II, CII), ubiquinol-cytochrome c oxidoreductase (cytochrome b-c1 complex, complex III, CIII) and cytochrome c oxidase (complex IV, CIV), that cooperate to transfer electrons derived from NADH and succinate to molecular oxygen, creating an electrochemical gradient over the inner membrane that drives transmembrane transport and the ATP synthase. Cytochrome c oxidase is the component of the respiratory chain that catalyzes the reduction of oxygen to water. Electrons originating from reduced cytochrome c in the intermembrane space (IMS) are transferred via the dinuclear copper A center (CU(A)) of COX2 and heme A of COX1 to the active site in COX1, a binuclear center (BNC) formed by heme A3 and copper B (CU(B)). The BNC reduces molecular oxygen to 2 water molecules using 4 electrons from cytochrome c in the IMS and 4 protons from the mitochondrial matrix. The polypeptide is Cytochrome c oxidase subunit 9, mitochondrial (COX9) (Saccharomyces cerevisiae (strain ATCC 204508 / S288c) (Baker's yeast)).